A 445-amino-acid chain; its full sequence is Na(+)-translocating NADH-quinone reductase subunit A (445 aa).

Belongs to the NqrA family. In terms of assembly, composed of six subunits; NqrA, NqrB, NqrC, NqrD, NqrE and NqrF.

It catalyses the reaction a ubiquinone + n Na(+)(in) + NADH + H(+) = a ubiquinol + n Na(+)(out) + NAD(+). NQR complex catalyzes the reduction of ubiquinone-1 to ubiquinol by two successive reactions, coupled with the transport of Na(+) ions from the cytoplasm to the periplasm. NqrA to NqrE are probably involved in the second step, the conversion of ubisemiquinone to ubiquinol. The polypeptide is Na(+)-translocating NADH-quinone reductase subunit A (Teredinibacter turnerae (strain ATCC 39867 / T7901)).